The sequence spans 437 residues: Pyrophosphate--fructose 6-phosphate 1-phosphotransferase (437 aa).

Gly-27 contacts diphosphate. Position 122 (Asp-122) interacts with Mg(2+). Substrate is bound by residues 147-149 (TID), 193-195 (MGR), Glu-261, and 323-326 (YELR). The Proton acceptor role is filled by Asp-149.

The protein belongs to the phosphofructokinase type A (PFKA) family. PPi-dependent PFK group II subfamily. Clade 'Short' sub-subfamily. As to quaternary structure, homotetramer. Mg(2+) serves as cofactor. The cofactor is Mn(2+).

The protein resides in the cytoplasm. The enzyme catalyses beta-D-fructose 6-phosphate + diphosphate = beta-D-fructose 1,6-bisphosphate + phosphate + H(+). The protein operates within carbohydrate degradation; glycolysis; D-glyceraldehyde 3-phosphate and glycerone phosphate from D-glucose: step 3/4. Activated by AMP. Probably promotes oligomerization of the enzyme. Catalyzes the phosphorylation of D-fructose 6-phosphate, the first committing step of glycolysis. Uses inorganic phosphate (PPi) as phosphoryl donor instead of ATP like common ATP-dependent phosphofructokinases (ATP-PFKs), which renders the reaction reversible, and can thus function both in glycolysis and gluconeogenesis. Consistently, PPi-PFK can replace the enzymes of both the forward (ATP-PFK) and reverse (fructose-bisphosphatase (FBPase)) reactions. This Naegleria fowleri (Brain eating amoeba) protein is Pyrophosphate--fructose 6-phosphate 1-phosphotransferase.